Consider the following 165-residue polypeptide: Phosphopantetheine adenylyltransferase (165 aa).

Thr9 contacts substrate. ATP is bound by residues 9–10 (TF) and His17. Substrate contacts are provided by Lys41, Leu73, and Arg87. ATP-binding positions include 88–90 (GLR), Glu98, and 123–129 (YQFISGT).

It belongs to the bacterial CoaD family. As to quaternary structure, homohexamer. Mg(2+) is required as a cofactor.

It is found in the cytoplasm. It carries out the reaction (R)-4'-phosphopantetheine + ATP + H(+) = 3'-dephospho-CoA + diphosphate. It participates in cofactor biosynthesis; coenzyme A biosynthesis; CoA from (R)-pantothenate: step 4/5. In terms of biological role, reversibly transfers an adenylyl group from ATP to 4'-phosphopantetheine, yielding dephospho-CoA (dPCoA) and pyrophosphate. This Burkholderia lata (strain ATCC 17760 / DSM 23089 / LMG 22485 / NCIMB 9086 / R18194 / 383) protein is Phosphopantetheine adenylyltransferase.